Reading from the N-terminus, the 391-residue chain is Arrestin-C (391 aa).

Over residues 369 to 379 the composition is skewed to basic and acidic residues; sequence ARQEPGGREES. Residues 369–391 are disordered; sequence ARQEPGGREESQEALAAEGDEGS.

The protein belongs to the arrestin family. As to quaternary structure, homodimer; disulfide-linked in response to retinal illumination. Interacts with CXCR4; the interaction is dependent on the C-terminal phosphorylation of CXCR4 and modulates the calcium ion mobilization activity of CXCR4. Interacts with GPR84.

The protein localises to the photoreceptor inner segment. It is found in the cell projection. The protein resides in the cilium. It localises to the photoreceptor outer segment. Functionally, may play a role in an as yet undefined retina-specific signal transduction. Could bind to photoactivated-phosphorylated red/green opsins. The polypeptide is Arrestin-C (ARR3) (Sus scrofa (Pig)).